The primary structure comprises 692 residues: PTS system glucoside-specific EIICBA component (692 aa).

Positions 6-430 (KKFFGQLQRI…LNLKTPGRED (425 aa)) constitute a PTS EIIC type-1 domain. A run of 10 helical transmembrane segments spans residues 15-35 (IGKA…LLTF), 84-104 (LGLA…YLIM), 140-160 (LVLG…IGAL), 185-205 (FVPI…SFVW), 215-235 (LSNF…GIIE), 287-307 (AFTT…AFAI), 318-338 (VVGG…ITEP), 344-364 (LFVA…SFLI), 370-390 (VQIG…GLLS), and 398-418 (LVIP…TFLI). The 82-residue stretch at 441 to 522 (SELPFEVLEA…QQIMDGKITS (82 aa)) folds into the PTS EIIB type-1 domain. Cysteine 463 acts as the Phosphocysteine intermediate; for EIIB activity in catalysis. The 105-residue stretch at 563 to 667 (DKVFSAKMMG…DTITPIIITN (105 aa)) folds into the PTS EIIA type-1 domain. Histidine 615 serves as the catalytic Tele-phosphohistidine intermediate; for EIIA activity.

It localises to the cell membrane. With respect to regulation, inhibited by methyl alpha-D-glucoside, methyl beta-D-glucoside, p-nitrophenyl alpha-D-glucoside, o-nitrophenyl beta-D-glucoside and salicin, but not by 2-deoxyglucose. Its function is as follows. The phosphoenolpyruvate-dependent sugar phosphotransferase system (sugar PTS), a major carbohydrate active -transport system, catalyzes the phosphorylation of incoming sugar substrates concomitantly with their translocation across the cell membrane. This system is involved in alpha- and beta-glucoside transport. Can also transport glucose, but not galactose, fructose, mannose, cellobiose, sucrose, maltose, lactose, melibiose and trehalose, as well as N-acetylglucosamine. This is PTS system glucoside-specific EIICBA component (glcB) from Staphylococcus carnosus (strain TM300).